The following is a 71-amino-acid chain: Beta-defensin 25 (71 aa).

The signal sequence occupies residues 1–22 (MAKWILLIVALLVLGHVPSGST). 3 disulfide bridges follow: Cys-27/Cys-54, Cys-34/Cys-48, and Cys-38/Cys-55.

It belongs to the beta-defensin family.

The protein resides in the secreted. In terms of biological role, has antibacterial activity. The sequence is that of Beta-defensin 25 (Defb25) from Rattus norvegicus (Rat).